A 155-amino-acid chain; its full sequence is Small ribosomal subunit protein uS7cz/uS7cy (155 aa).

This sequence belongs to the universal ribosomal protein uS7 family. As to quaternary structure, part of the 30S ribosomal subunit.

It is found in the plastid. The protein resides in the chloroplast. One of the primary rRNA binding proteins, it binds directly to 16S rRNA where it nucleates assembly of the head domain of the 30S subunit. This chain is Small ribosomal subunit protein uS7cz/uS7cy (rps7-A), found in Crucihimalaya wallichii (Rock-cress).